Reading from the N-terminus, the 351-residue chain is Phosphate acyltransferase (351 aa).

The protein belongs to the PlsX family. Homodimer. Probably interacts with PlsY.

Its subcellular location is the cytoplasm. The catalysed reaction is a fatty acyl-[ACP] + phosphate = an acyl phosphate + holo-[ACP]. Its pathway is lipid metabolism; phospholipid metabolism. Its function is as follows. Catalyzes the reversible formation of acyl-phosphate (acyl-PO(4)) from acyl-[acyl-carrier-protein] (acyl-ACP). This enzyme utilizes acyl-ACP as fatty acyl donor, but not acyl-CoA. This Verminephrobacter eiseniae (strain EF01-2) protein is Phosphate acyltransferase.